The primary structure comprises 355 residues: Uroporphyrinogen decarboxylase (355 aa).

Substrate-binding positions include 27–31 (RQAGR), Asp77, Tyr154, Thr209, and His327.

This sequence belongs to the uroporphyrinogen decarboxylase family. As to quaternary structure, homodimer.

The protein resides in the cytoplasm. The enzyme catalyses uroporphyrinogen III + 4 H(+) = coproporphyrinogen III + 4 CO2. Its pathway is porphyrin-containing compound metabolism; protoporphyrin-IX biosynthesis; coproporphyrinogen-III from 5-aminolevulinate: step 4/4. Its function is as follows. Catalyzes the decarboxylation of four acetate groups of uroporphyrinogen-III to yield coproporphyrinogen-III. The sequence is that of Uroporphyrinogen decarboxylase from Yersinia enterocolitica serotype O:8 / biotype 1B (strain NCTC 13174 / 8081).